The primary structure comprises 245 residues: Tegument protein UL51 homolog (245 aa).

A lipid anchor (S-palmitoyl cysteine; by host) is attached at Cys-10. The tract at residues 225 to 245 (PVKSNLKSKHKPKRKASLVAV) is disordered. Residues 230-245 (LKSKHKPKRKASLVAV) are compositionally biased toward basic residues.

The protein belongs to the herpesviridae UL51 family. Oligomerizes. Interacts with ORF55; this interaction mediates ORF55 incorporation to virions. Post-translationally, phosphorylated. In terms of processing, palmitoylation is necessary for Golgi localization.

The protein localises to the virion tegument. The protein resides in the host cytoplasm. Its subcellular location is the host Golgi apparatus. Its function is as follows. Plays several roles during the time course of infection, including egress of virus particles from the perinuclear space and secondary envelopment of cytoplasmic capsids that bud into specific trans-Golgi network (TGN)-derived membranes. The chain is Tegument protein UL51 homolog from Equine herpesvirus 1 (strain Ab4p) (EHV-1).